A 732-amino-acid polypeptide reads, in one-letter code: Exonuclease 1 (732 aa).

The N-domain stretch occupies residues 1–99 (MGITGLIPFV…KRRRDSRKQS (99 aa)). Residues Asp-30, Asp-78, Glu-150, Asp-152, Asp-171, Asp-173, and Asp-226 each contribute to the Mg(2+) site. Residues 138–230 (RSRNVDCIVA…ILSGCDYLDS (93 aa)) are I-domain. Disordered stretches follow at residues 422-471 (YSFK…QRSP), 524-625 (DEQT…TNST), and 661-716 (SCSS…VSQN). Phosphoserine occurs at positions 431 and 433. A compositionally biased stretch (basic and acidic residues) spans 432 to 442 (PSREDSVDQER). A Phosphothreonine modification is found at Thr-443. Phosphoserine is present on Ser-447. Basic and acidic residues-rich tracts occupy residues 457–467 (FAKERTGEEAN) and 525–537 (EQTR…LRDT). 2 stretches are compositionally biased toward polar residues: residues 572–593 (RCSS…SLLE) and 608–625 (DLNN…TNST). Positions 661–677 (SCSSDQRASSTSSSSQQ) are enriched in low complexity. The span at 703 to 716 (KSRTNGKLGAVSQN) shows a compositional bias: polar residues.

This sequence belongs to the XPG/RAD2 endonuclease family. EXO1 subfamily. It depends on Mg(2+) as a cofactor. In terms of tissue distribution, specifically expressed in the female germline.

Its subcellular location is the nucleus. Functionally, 5'-&gt;3' double-stranded DNA exonuclease which may also contain a cryptic 3'-&gt;5' double-stranded DNA exonuclease activity. Also exhibits endonuclease activity against 5'-overhanging flap structures similar to those generated by displacement synthesis when DNA polymerase encounters the 5'-end of a downstream Okazaki fragment. Required for DNA mismatch repair (MMR). The chain is Exonuclease 1 (tos) from Drosophila melanogaster (Fruit fly).